Reading from the N-terminus, the 184-residue chain is ATP synthase subunit b, chloroplastic (184 aa).

A helical membrane pass occupies residues 27-49 (FATNPINLSVVLGVLIFFGKGVL).

The protein belongs to the ATPase B chain family. In terms of assembly, F-type ATPases have 2 components, F(1) - the catalytic core - and F(0) - the membrane proton channel. F(1) has five subunits: alpha(3), beta(3), gamma(1), delta(1), epsilon(1). F(0) has four main subunits: a(1), b(1), b'(1) and c(10-14). The alpha and beta chains form an alternating ring which encloses part of the gamma chain. F(1) is attached to F(0) by a central stalk formed by the gamma and epsilon chains, while a peripheral stalk is formed by the delta, b and b' chains.

The protein resides in the plastid. It localises to the chloroplast thylakoid membrane. Its function is as follows. F(1)F(0) ATP synthase produces ATP from ADP in the presence of a proton or sodium gradient. F-type ATPases consist of two structural domains, F(1) containing the extramembraneous catalytic core and F(0) containing the membrane proton channel, linked together by a central stalk and a peripheral stalk. During catalysis, ATP synthesis in the catalytic domain of F(1) is coupled via a rotary mechanism of the central stalk subunits to proton translocation. In terms of biological role, component of the F(0) channel, it forms part of the peripheral stalk, linking F(1) to F(0). The chain is ATP synthase subunit b, chloroplastic from Amborella trichopoda.